The following is a 157-amino-acid chain: Protein Smg homolog (157 aa).

This sequence belongs to the Smg family.

The polypeptide is Protein Smg homolog (Shewanella frigidimarina (strain NCIMB 400)).